Here is a 283-residue protein sequence, read N- to C-terminus: Acetylglutamate kinase (283 aa).

Residues 64–65 (GG), R86, and N181 contribute to the substrate site.

It belongs to the acetylglutamate kinase family. ArgB subfamily.

It localises to the cytoplasm. It catalyses the reaction N-acetyl-L-glutamate + ATP = N-acetyl-L-glutamyl 5-phosphate + ADP. It functions in the pathway amino-acid biosynthesis; L-arginine biosynthesis; N(2)-acetyl-L-ornithine from L-glutamate: step 2/4. In terms of biological role, catalyzes the ATP-dependent phosphorylation of N-acetyl-L-glutamate. The polypeptide is Acetylglutamate kinase (Sulfurimonas denitrificans (strain ATCC 33889 / DSM 1251) (Thiomicrospira denitrificans (strain ATCC 33889 / DSM 1251))).